Reading from the N-terminus, the 284-residue chain is Nucleotide-binding protein NMCC_0698 (284 aa).

8-15 contacts ATP; sequence GLSGSGKS. Position 58–61 (58–61) interacts with GTP; it reads DVRS.

It belongs to the RapZ-like family.

Functionally, displays ATPase and GTPase activities. In Neisseria meningitidis serogroup C (strain 053442), this protein is Nucleotide-binding protein NMCC_0698.